A 444-amino-acid chain; its full sequence is 3-isopropylmalate dehydratase large subunit (444 aa).

[4Fe-4S] cluster-binding residues include Cys348, Cys408, and Cys411.

The protein belongs to the aconitase/IPM isomerase family. LeuC type 1 subfamily. As to quaternary structure, heterodimer of LeuC and LeuD. [4Fe-4S] cluster is required as a cofactor.

The catalysed reaction is (2R,3S)-3-isopropylmalate = (2S)-2-isopropylmalate. It functions in the pathway amino-acid biosynthesis; L-leucine biosynthesis; L-leucine from 3-methyl-2-oxobutanoate: step 2/4. Its function is as follows. Catalyzes the isomerization between 2-isopropylmalate and 3-isopropylmalate, via the formation of 2-isopropylmaleate. The protein is 3-isopropylmalate dehydratase large subunit of Buchnera aphidicola subsp. Uroleucon ambrosiae.